The chain runs to 143 residues: Peptide methionine sulfoxide reductase MsrB (143 aa).

Residues 16 to 139 (DAELRRRLTP…NSAALNFEAK (124 aa)) enclose the MsrB domain. Positions 55, 58, 104, and 107 each coordinate Zn(2+). The active-site Nucleophile is Cys-128.

This sequence belongs to the MsrB Met sulfoxide reductase family. The cofactor is Zn(2+).

The catalysed reaction is L-methionyl-[protein] + [thioredoxin]-disulfide + H2O = L-methionyl-(R)-S-oxide-[protein] + [thioredoxin]-dithiol. This chain is Peptide methionine sulfoxide reductase MsrB, found in Burkholderia mallei (strain NCTC 10229).